A 198-amino-acid chain; its full sequence is Pyridoxal 5'-phosphate synthase subunit PdxT (198 aa).

50–52 (GES) serves as a coordination point for L-glutamine. Cys-82 (nucleophile) is an active-site residue. Residues Arg-111 and 140 to 141 (IR) contribute to the L-glutamine site. Active-site charge relay system residues include His-177 and Glu-179.

It belongs to the glutaminase PdxT/SNO family. As to quaternary structure, in the presence of PdxS, forms a dodecamer of heterodimers. Only shows activity in the heterodimer.

It catalyses the reaction aldehydo-D-ribose 5-phosphate + D-glyceraldehyde 3-phosphate + L-glutamine = pyridoxal 5'-phosphate + L-glutamate + phosphate + 3 H2O + H(+). The enzyme catalyses L-glutamine + H2O = L-glutamate + NH4(+). The protein operates within cofactor biosynthesis; pyridoxal 5'-phosphate biosynthesis. Functionally, catalyzes the hydrolysis of glutamine to glutamate and ammonia as part of the biosynthesis of pyridoxal 5'-phosphate. The resulting ammonia molecule is channeled to the active site of PdxS. This Leifsonia xyli subsp. xyli (strain CTCB07) protein is Pyridoxal 5'-phosphate synthase subunit PdxT.